We begin with the raw amino-acid sequence, 336 residues long: N-acetyl-gamma-glutamyl-phosphate reductase (336 aa).

Cysteine 156 is an active-site residue.

The protein belongs to the NAGSA dehydrogenase family. Type 1 subfamily.

Its subcellular location is the cytoplasm. It catalyses the reaction N-acetyl-L-glutamate 5-semialdehyde + phosphate + NADP(+) = N-acetyl-L-glutamyl 5-phosphate + NADPH + H(+). Its pathway is amino-acid biosynthesis; L-arginine biosynthesis; N(2)-acetyl-L-ornithine from L-glutamate: step 3/4. Its function is as follows. Catalyzes the NADPH-dependent reduction of N-acetyl-5-glutamyl phosphate to yield N-acetyl-L-glutamate 5-semialdehyde. This Moritella profunda protein is N-acetyl-gamma-glutamyl-phosphate reductase.